We begin with the raw amino-acid sequence, 270 residues long: Tryptophan 2,3-dioxygenase-like protein (270 aa).

Belongs to the tryptophan 2,3-dioxygenase family.

This chain is Tryptophan 2,3-dioxygenase-like protein, found in Xanthomonas campestris pv. campestris (strain 8004).